The chain runs to 187 residues: Putative manganese efflux pump MntP (187 aa).

A run of 6 helical transmembrane segments spans residues 3–23, 35–55, 56–76, 107–127, 129–149, and 166–186; these read FYSL…VSLC, HYLI…TIGY, FIGI…AFIL, LALA…FAFL, VNLL…CIIA, and LLGG…HLFF.

Belongs to the MntP (TC 9.B.29) family.

It is found in the cell inner membrane. Functionally, probably functions as a manganese efflux pump. The polypeptide is Putative manganese efflux pump MntP (Campylobacter jejuni (strain RM1221)).